Reading from the N-terminus, the 342-residue chain is Transcriptional regulator of the unfolded protein response hacA (342 aa).

Residues 1–105 are disordered; that stretch reads MEDNFASVVE…TSRERKRLEM (105 aa). Composition is skewed to basic and acidic residues over residues 35–48 and 74–88; these read PETK…EEKK and KTED…ERVL. The bZIP domain occupies 80 to 143; it reads EQRRIERVLR…NRLSQQLAQL (64 aa). The interval 82 to 135 is basic motif; sequence RRIERVLRNRAAAQTSRERKRLEMEKLENEKIQMEQQNQFLLQRLSQMEAENNR. The interval 136 to 143 is leucine-zipper; it reads LSQQLAQL. 2 disordered regions span residues 146-167 and 306-330; these read EVRN…SPTL and EPAH…GAST. The span at 315-330 shows a compositional bias: polar residues; sequence TPYQTSGLQPSLGAST.

Belongs to the bZIP family.

Its subcellular location is the nucleus. In terms of biological role, master transcriptional regulator of the unfolded protein response (UPR) that recognizes and binds to the UPR element (UPRE) in the promoter of UPR-regulated genes. In the canonical UPR pathway, the ireA RNase splices the cytoplasmic mRNA hacA, which alters the reading frame to allow translation of the bZIP transcription factor hacA. Induces the expression of pmrA, scrA and spfA in response to UPR. The chain is Transcriptional regulator of the unfolded protein response hacA from Aspergillus fumigatus (strain ATCC MYA-4609 / CBS 101355 / FGSC A1100 / Af293) (Neosartorya fumigata).